The sequence spans 788 residues: Protein translocase subunit SecA 2 (788 aa).

ATP contacts are provided by residues glutamine 86, 104 to 108 (GEGKT), and aspartate 493.

Belongs to the SecA family. As to quaternary structure, monomer and homodimer. Part of the essential Sec protein translocation apparatus which comprises SecA, SecYEG and auxiliary proteins SecDF. Other proteins may also be involved.

The protein localises to the cell membrane. It localises to the cytoplasm. The catalysed reaction is ATP + H2O + cellular proteinSide 1 = ADP + phosphate + cellular proteinSide 2.. Functionally, part of the Sec protein translocase complex. Interacts with the SecYEG preprotein conducting channel. Has a central role in coupling the hydrolysis of ATP to the transfer of proteins into and across the cell membrane, serving as an ATP-driven molecular motor driving the stepwise translocation of polypeptide chains across the membrane. This is Protein translocase subunit SecA 2 from Bacillus anthracis.